We begin with the raw amino-acid sequence, 488 residues long: Gamma-aminobutyric acid receptor subunit beta-4 (488 aa).

The N-terminal stretch at 1-25 (MWTFQADRLSGIVSALAALCVACCA) is a signal peptide. Over 26 to 244 (QSPSTGNISV…SFRIKRNIGY (219 aa)) the chain is Extracellular. N-linked (GlcNAc...) asparagine glycosylation is found at Asn32, Asn104, Asn173, and Asn195. Residues Cys160 and Cys174 are joined by a disulfide bond. A run of 3 helical transmembrane segments spans residues 245 to 266 (FILQ…SFWI), 271 to 292 (SAAR…NTHL), and 304 to 326 (AIDV…YAFV). Residues 327 to 465 (NYIFFGRGPR…DLTDVSTIDK (139 aa)) lie on the Cytoplasmic side of the membrane. The helical transmembrane segment at 466-487 (WSRIIFPITFGFFNLVYWLYYV) threads the bilayer.

This sequence belongs to the ligand-gated ion channel (TC 1.A.9) family. Gamma-aminobutyric acid receptor (TC 1.A.9.5) subfamily. GABRB4 sub-subfamily. Generally pentameric. There are five types of GABA(A) receptor chains: alpha, beta, gamma, delta, and rho.

It is found in the postsynaptic cell membrane. The protein resides in the cell membrane. GABA, the major inhibitory neurotransmitter in the vertebrate brain, mediates neuronal inhibition by binding to the GABA/benzodiazepine receptor and opening an integral chloride channel. The chain is Gamma-aminobutyric acid receptor subunit beta-4 (GABRB4) from Gallus gallus (Chicken).